Here is a 443-residue protein sequence, read N- to C-terminus: ATP-dependent protease ATPase subunit HslU (443 aa).

ATP is bound by residues I20, 62 to 67 (GVGKTE), D255, E321, and R393.

This sequence belongs to the ClpX chaperone family. HslU subfamily. In terms of assembly, a double ring-shaped homohexamer of HslV is capped on each side by a ring-shaped HslU homohexamer. The assembly of the HslU/HslV complex is dependent on binding of ATP.

Its subcellular location is the cytoplasm. Its function is as follows. ATPase subunit of a proteasome-like degradation complex; this subunit has chaperone activity. The binding of ATP and its subsequent hydrolysis by HslU are essential for unfolding of protein substrates subsequently hydrolyzed by HslV. HslU recognizes the N-terminal part of its protein substrates and unfolds these before they are guided to HslV for hydrolysis. This is ATP-dependent protease ATPase subunit HslU from Helicobacter pylori (strain Shi470).